Here is a 112-residue protein sequence, read N- to C-terminus: UPF0102 protein Pmob_0702 (112 aa).

Belongs to the UPF0102 family.

This Petrotoga mobilis (strain DSM 10674 / SJ95) protein is UPF0102 protein Pmob_0702.